The primary structure comprises 666 residues: DNA ligase (666 aa).

NAD(+)-binding positions include 34 to 38 (DEEYD), 83 to 84 (SL), and glutamate 114. Catalysis depends on lysine 116, which acts as the N6-AMP-lysine intermediate. 4 residues coordinate NAD(+): arginine 137, glutamate 174, lysine 290, and lysine 314. The Zn(2+) site is built by cysteine 408, cysteine 411, cysteine 424, and cysteine 429. A BRCT domain is found at 584–666 (SIEGPLKGLT…LKMVKREHNG (83 aa)).

Belongs to the NAD-dependent DNA ligase family. LigA subfamily. The cofactor is Mg(2+). Requires Mn(2+) as cofactor.

The enzyme catalyses NAD(+) + (deoxyribonucleotide)n-3'-hydroxyl + 5'-phospho-(deoxyribonucleotide)m = (deoxyribonucleotide)n+m + AMP + beta-nicotinamide D-nucleotide.. Functionally, DNA ligase that catalyzes the formation of phosphodiester linkages between 5'-phosphoryl and 3'-hydroxyl groups in double-stranded DNA using NAD as a coenzyme and as the energy source for the reaction. It is essential for DNA replication and repair of damaged DNA. The polypeptide is DNA ligase (Coprothermobacter proteolyticus (strain ATCC 35245 / DSM 5265 / OCM 4 / BT)).